The following is a 229-amino-acid chain: Large ribosomal subunit protein uL1 (229 aa).

Belongs to the universal ribosomal protein uL1 family. As to quaternary structure, part of the 50S ribosomal subunit.

Its function is as follows. Binds directly to 23S rRNA. The L1 stalk is quite mobile in the ribosome, and is involved in E site tRNA release. Protein L1 is also a translational repressor protein, it controls the translation of the L11 operon by binding to its mRNA. The polypeptide is Large ribosomal subunit protein uL1 (Clostridium botulinum (strain ATCC 19397 / Type A)).